Consider the following 328-residue polypeptide: Ribosomal protein L11 methyltransferase (328 aa).

Residues threonine 158, glycine 180, aspartate 202, and asparagine 246 each contribute to the S-adenosyl-L-methionine site.

Belongs to the methyltransferase superfamily. PrmA family.

It localises to the cytoplasm. The enzyme catalyses L-lysyl-[protein] + 3 S-adenosyl-L-methionine = N(6),N(6),N(6)-trimethyl-L-lysyl-[protein] + 3 S-adenosyl-L-homocysteine + 3 H(+). Its function is as follows. Methylates ribosomal protein L11. This is Ribosomal protein L11 methyltransferase from Polynucleobacter necessarius subsp. necessarius (strain STIR1).